The following is a 192-amino-acid chain: UPF0149 protein YgfB (192 aa).

It belongs to the UPF0149 family.

This chain is UPF0149 protein YgfB, found in Salmonella agona (strain SL483).